Consider the following 159-residue polypeptide: Nucleotide-binding protein Avin_13410 (159 aa).

Belongs to the YajQ family.

Nucleotide-binding protein. In Azotobacter vinelandii (strain DJ / ATCC BAA-1303), this protein is Nucleotide-binding protein Avin_13410.